The following is a 143-amino-acid chain: Anti-sigma F factor (143 aa).

This sequence belongs to the anti-sigma-factor family.

It catalyses the reaction L-seryl-[protein] + ATP = O-phospho-L-seryl-[protein] + ADP + H(+). The catalysed reaction is L-threonyl-[protein] + ATP = O-phospho-L-threonyl-[protein] + ADP + H(+). In terms of biological role, binds to sigma F and blocks its ability to form an RNA polymerase holoenzyme (E-sigma F). Phosphorylates SpoIIAA on a serine residue. This phosphorylation may enable SpoIIAA to act as an anti-anti-sigma factor that counteracts SpoIIAB and thus releases sigma F from inhibition. The chain is Anti-sigma F factor from Clostridium botulinum (strain Eklund 17B / Type B).